A 165-amino-acid chain; its full sequence is UPF0303 protein BTH_I2506 (165 aa).

It belongs to the UPF0303 family.

This is UPF0303 protein BTH_I2506 from Burkholderia thailandensis (strain ATCC 700388 / DSM 13276 / CCUG 48851 / CIP 106301 / E264).